The primary structure comprises 555 residues: Pyrophosphate--fructose 6-phosphate 1-phosphotransferase (555 aa).

Gly82 serves as a coordination point for diphosphate. Position 146 (Arg146) interacts with substrate. Mg(2+) is bound at residue Asp176. Residues Thr204–Asp206, Lys243–Tyr244, Met251–Arg253, Glu312, and Tyr428–Arg431 contribute to the substrate site. Asp206 functions as the Proton acceptor in the catalytic mechanism.

Belongs to the phosphofructokinase type A (PFKA) family. PPi-dependent PFK group II subfamily. Clade 'Long' sub-subfamily. As to quaternary structure, homodimer. Mg(2+) is required as a cofactor.

The protein localises to the cytoplasm. It carries out the reaction beta-D-fructose 6-phosphate + diphosphate = beta-D-fructose 1,6-bisphosphate + phosphate + H(+). It participates in carbohydrate degradation; glycolysis; D-glyceraldehyde 3-phosphate and glycerone phosphate from D-glucose: step 3/4. Non-allosteric. Its function is as follows. Catalyzes the phosphorylation of D-fructose 6-phosphate, the first committing step of glycolysis. Uses inorganic phosphate (PPi) as phosphoryl donor instead of ATP like common ATP-dependent phosphofructokinases (ATP-PFKs), which renders the reaction reversible, and can thus function both in glycolysis and gluconeogenesis. Consistently, PPi-PFK can replace the enzymes of both the forward (ATP-PFK) and reverse (fructose-bisphosphatase (FBPase)) reactions. In Borreliella burgdorferi (strain ATCC 35210 / DSM 4680 / CIP 102532 / B31) (Borrelia burgdorferi), this protein is Pyrophosphate--fructose 6-phosphate 1-phosphotransferase.